The primary structure comprises 390 residues: Zinc transporter 7-B (390 aa).

Topologically, residues 1–37 (MLPLSIKDDEYKPPKFNLVRKVSGWIRSIFSDSTSRN) are cytoplasmic. The helical transmembrane segment at 38 to 58 (LFCFLCLNLSFAFVELFYGIW) threads the bilayer. At 59–67 (SNSLGLISD) the chain is on the lumenal side. The helical transmembrane segment at 68–88 (SFHMFFDCTALLAGLAASVIS) threads the bilayer. Residues 89–102 (RWKTNETFSYGYVR) are Cytoplasmic-facing. A helical transmembrane segment spans residues 103 to 123 (AEVLAGFVNGLFLIFTAFFIF). Residues 124–140 (SEGIERALDTPEVHHER) are Lumenal-facing. A helical membrane pass occupies residues 141–161 (LLPVSIMGFLVNLIGIFVFQH). The tract at residues 161-226 (HGGGHGHSHE…GHDHSHKHGH (66 aa)) is his-rich loop. Residues 162–250 (GGGHGHSHES…KGSSKQILEG (89 aa)) are Cytoplasmic-facing. The segment at 166 to 243 (GHSHESGHGH…DEPPEENKGS (78 aa)) is disordered. Basic residues predominate over residues 187–201 (GHSHSHGGGHGHSHG). Basic and acidic residues-rich tracts occupy residues 202 to 218 (GGHEHGHSHGGGHEHGH) and 232 to 242 (CHDEPPEENKG). A helical membrane pass occupies residues 251–271 (VFLHIVADALGSVGVIISTIL). Topologically, residues 272–276 (MQQYG) are lumenal. Residues 277–297 (LMIADPICSMLIALLIFVSVI) traverse the membrane as a helical segment. At 298–390 (PLLKQSIGIL…LYVQIDLAAM (93 aa)) the chain is on the cytoplasmic side.

This sequence belongs to the cation diffusion facilitator (CDF) transporter (TC 2.A.4) family. SLC30A subfamily. As to quaternary structure, homooligomer.

The protein localises to the golgi apparatus membrane. It is found in the cytoplasmic vesicle. Its subcellular location is the golgi apparatus. The protein resides in the trans-Golgi network. It localises to the sarcoplasmic reticulum. The protein localises to the mitochondrion. It carries out the reaction Zn(2+)(in) = Zn(2+)(out). Functionally, zinc ion transporter mediating zinc entry from the cytosol into the lumen of organelles along the secretory pathway. By contributing to zinc ion homeostasis within the early secretory pathway, regulates the activation and folding of enzymes like alkaline phosphatases. The chain is Zinc transporter 7-B (slc30a7-b) from Xenopus laevis (African clawed frog).